A 697-amino-acid chain; its full sequence is MSKINKLEHIRNIGICAHIDAGKTTTTERILYYTGKSHKIGEVHEGGATMDWMEQEQERGITITSAATTCRWQDKIINIIDTPGHVDFTIEVERSLRVLDGAVAVLDGVAGVEPQSETVWRQADKYNVPRMCFVNKMDRMGADFYRCVEMLKDRLGAKPLVIQLPVGIEENFKGIIDLVKMKVVIWKDEALGAEYFEEDIPADMKDKAEEYHAKLLDMVVELDDHVMEKYLSGEEVTAEEIKRLISKGTISAAFYPVLCGSAFKNKGVQPLLDAVVDFLPSPTDIGIVKGMEVSTGEEKDFPISELEPFAALAFKIMNDPFVGSLTFIRIYSGKITSGTTVINTVKNKREKIGRMLLMHSNNREDVKEASAGDIVALAGLKDTTTGDTLSDIDQQVILEKMEFPEPVIELAVEPKSTADQEKMGLALSRLAAEDPSFRVSTDHETGQTVIKGMGELHLEIIIDRMRREFKVEANIGAPQVAYRETITKACEIDYTHKKQSGGAGQFARVKIIFEPLKDVKDLKDEDKIFVFESKIIGGAVPKEYIPGVEKGLNNIRETGVIAGYPMIDFKATLVDGAFHDVDSSVLAFEIAAKAAFREGMPKGNPKLLEPIMQVEVITPDEYMGDIIGDLNSRRGQIQSMDPRGNAQVVTANVPLAEMFGYVNTLRSLSQGRAQFSMIFSHYDQVPSQVADIIKAKK.

A tr-type G domain is found at 8 to 283; the sequence is EHIRNIGICA…AVVDFLPSPT (276 aa). Residues 17–24, 81–85, and 135–138 contribute to the GTP site; these read AHIDAGKT, DTPGH, and NKMD.

It belongs to the TRAFAC class translation factor GTPase superfamily. Classic translation factor GTPase family. EF-G/EF-2 subfamily.

The protein resides in the cytoplasm. In terms of biological role, catalyzes the GTP-dependent ribosomal translocation step during translation elongation. During this step, the ribosome changes from the pre-translocational (PRE) to the post-translocational (POST) state as the newly formed A-site-bound peptidyl-tRNA and P-site-bound deacylated tRNA move to the P and E sites, respectively. Catalyzes the coordinated movement of the two tRNA molecules, the mRNA and conformational changes in the ribosome. The sequence is that of Elongation factor G from Rickettsia rhipicephali.